The sequence spans 193 residues: dCTP deaminase (193 aa).

Residues 110–115 (RSSLAR), Asp-128, 136–138 (VLE), Tyr-171, Lys-178, and Gln-182 contribute to the dCTP site. Residue Glu-138 is the Proton donor/acceptor of the active site.

Belongs to the dCTP deaminase family. In terms of assembly, homotrimer.

The catalysed reaction is dCTP + H2O + H(+) = dUTP + NH4(+). Its pathway is pyrimidine metabolism; dUMP biosynthesis; dUMP from dCTP (dUTP route): step 1/2. Its function is as follows. Catalyzes the deamination of dCTP to dUTP. This Buchnera aphidicola subsp. Baizongia pistaciae (strain Bp) protein is dCTP deaminase.